The primary structure comprises 472 residues: Maintenance of mitochondrial morphology protein 1 (472 aa).

The Lumenal portion of the chain corresponds to 1–22; sequence MAFQQGEAAPVSTQSSLSFTQG. Residues 23–43 form a helical membrane-spanning segment; that stretch reads FLLGQLSVVLLIGAFIKFFIF. Over 44–472 the chain is Cytoplasmic; the sequence is GEAPPPPSRG…GSMPEAPGAQ (429 aa). Disordered regions lie at residues 51-92, 270-303, and 370-472; these read SRGL…VPSS, LHTP…PKSS, and RMGR…PGAQ. Polar residues predominate over residues 81–92; sequence STSNVLRPVPSS. Positions 124 to 365 constitute an SMP-LTD domain; it reads QPESLDWFNV…EPRVQVVGLP (242 aa). The segment covering 270 to 280 has biased composition (pro residues); that stretch reads LHTPSPMPSPP. Residues 281–297 are compositionally biased toward low complexity; the sequence is TAGAQPAAGAQPTDGGD. Positions 450–460 are enriched in basic and acidic residues; that stretch reads TRERSLGDDFH.

Belongs to the MMM1 family. In terms of assembly, homodimer. Component of the ER-mitochondria encounter structure (ERMES) or MDM complex, composed of mmm1, mdm10, mdm12 and mdm34. A mmm1 homodimer associates with one molecule of mdm12 on each side in a pairwise head-to-tail manner, and the SMP-LTD domains of mmm1 and mdm12 generate a continuous hydrophobic tunnel for phospholipid trafficking.

It is found in the endoplasmic reticulum membrane. Component of the ERMES/MDM complex, which serves as a molecular tether to connect the endoplasmic reticulum (ER) and mitochondria. Components of this complex are involved in the control of mitochondrial shape and protein biogenesis, and function in nonvesicular lipid trafficking between the ER and mitochondria. The mdm12-mmm1 subcomplex functions in the major beta-barrel assembly pathway that is responsible for biogenesis of all outer membrane beta-barrel proteins, and acts in a late step after the SAM complex. The mdm10-mdm12-mmm1 subcomplex further acts in the TOM40-specific pathway after the action of the mdm12-mmm1 complex. Essential for establishing and maintaining the structure of mitochondria and maintenance of mtDNA nucleoids. The chain is Maintenance of mitochondrial morphology protein 1 from Emericella nidulans (strain FGSC A4 / ATCC 38163 / CBS 112.46 / NRRL 194 / M139) (Aspergillus nidulans).